A 570-amino-acid chain; its full sequence is MKMSNMLVGTLREVPAEAEIESHKLMLRAGLMRKMAAGIYNYMPLGLKVIENVKNIVREEMNNAGAQEFLASALIPAELWQESGRWDAYGAEMFRLKDRHNRDFCLGPTHEEVFTDIVRNEIKSYKQLPLNLYQIQTKYRDERRPRFGVMRSREFIMKDGYSFDKDQEGLDLAYEKMRKAYVNIFNRCGLDAKAVAADSGAIGGSGSAEFMVKSEVGEDDVVFCTACDYAANIEKAPSTPEHAEKEELMEVEKVETPAVKSIEDLAKFFECSPKKIAKTLIFQADDKVVAVVLRGDREANEVKIANAIGEVIELEMASEEAVKEATGAAVGFAGPMGIKVDILLVDQEVANMYNFIIGANETDMHLKNVNYGRDFEGIVGDFRNVTIGEKCPECGKEITISRGTEVGHIFKLGTKYSESMGATFIDEDGKAKPFIMGCYGIGVTRTVASIIEQHNDENGIIWPLEVAPYHVSVIPANVKNEEQATKAEEIYNELRKMGVEALLDDRKERAGVKFKDSELMGIPMRITVGKMIGEGQVEFKLRNGGEVETLSIEEVYNRVRKEFERENLSL.

Belongs to the class-II aminoacyl-tRNA synthetase family. ProS type 1 subfamily. As to quaternary structure, homodimer.

The protein localises to the cytoplasm. The catalysed reaction is tRNA(Pro) + L-proline + ATP = L-prolyl-tRNA(Pro) + AMP + diphosphate. Functionally, catalyzes the attachment of proline to tRNA(Pro) in a two-step reaction: proline is first activated by ATP to form Pro-AMP and then transferred to the acceptor end of tRNA(Pro). As ProRS can inadvertently accommodate and process non-cognate amino acids such as alanine and cysteine, to avoid such errors it has two additional distinct editing activities against alanine. One activity is designated as 'pretransfer' editing and involves the tRNA(Pro)-independent hydrolysis of activated Ala-AMP. The other activity is designated 'posttransfer' editing and involves deacylation of mischarged Ala-tRNA(Pro). The misacylated Cys-tRNA(Pro) is not edited by ProRS. This Clostridium perfringens (strain SM101 / Type A) protein is Proline--tRNA ligase.